We begin with the raw amino-acid sequence, 187 residues long: Pumilio homolog 26 (187 aa).

One copy of the Pumilio 1; degenerate repeat lies at Val20 to Thr42. One copy of the Pumilio 2; degenerate repeat lies at Ser43–Val78. The Pumilio 3; degenerate repeat unit spans residues Ile79 to Leu116. Residues Arg117–Leu154 form a Pumilio 4; degenerate repeat. A Pumilio 5 repeat occupies Lys155 to Val187.

It is found in the cytoplasm. Its function is as follows. Sequence-specific RNA-binding protein that regulates translation and mRNA stability by binding the 3'-UTR of target mRNAs. The protein is Pumilio homolog 26 (APUM26) of Arabidopsis thaliana (Mouse-ear cress).